We begin with the raw amino-acid sequence, 127 residues long: Protein ApaG (127 aa).

Residues 3 to 127 form the ApaG domain; that stretch reads KSETYRIEVE…FMLAMPRVLH (125 aa).

The chain is Protein ApaG from Azoarcus sp. (strain BH72).